A 135-amino-acid polypeptide reads, in one-letter code: Transcription antitermination protein NusB (135 aa).

The protein belongs to the NusB family.

In terms of biological role, involved in transcription antitermination. Required for transcription of ribosomal RNA (rRNA) genes. Binds specifically to the boxA antiterminator sequence of the ribosomal RNA (rrn) operons. The sequence is that of Transcription antitermination protein NusB from Clostridium acetobutylicum (strain ATCC 824 / DSM 792 / JCM 1419 / IAM 19013 / LMG 5710 / NBRC 13948 / NRRL B-527 / VKM B-1787 / 2291 / W).